We begin with the raw amino-acid sequence, 461 residues long: Eukaryotic translation initiation factor 3 subunit M (461 aa).

The disordered stretch occupies residues 42-61 (LLEPLRQQEQSDAEPDRKQR). Residues 205-376 (DQELAQTHVV…SEFLVHRATY (172 aa)) form the PCI domain. Positions 422-461 (AAEEAAQGKSGDKKGDRRQRRDQPQQSQPAPEAATAVAAE) are disordered. Residues 431-444 (SGDKKGDRRQRRDQ) are compositionally biased toward basic and acidic residues. Positions 445–461 (PQQSQPAPEAATAVAAE) are enriched in low complexity.

Belongs to the eIF-3 subunit M family. Component of the eukaryotic translation initiation factor 3 (eIF-3) complex.

It is found in the cytoplasm. Functionally, component of the eukaryotic translation initiation factor 3 (eIF-3) complex, which is involved in protein synthesis of a specialized repertoire of mRNAs and, together with other initiation factors, stimulates binding of mRNA and methionyl-tRNAi to the 40S ribosome. The eIF-3 complex specifically targets and initiates translation of a subset of mRNAs involved in cell proliferation. The chain is Eukaryotic translation initiation factor 3 subunit M from Aspergillus terreus (strain NIH 2624 / FGSC A1156).